A 461-amino-acid chain; its full sequence is Steroidogenic factor 1 (461 aa).

Residues 10 to 85 constitute a DNA-binding region (nuclear receptor); sequence DELCPVCGDK…VGMRLEAVRA (76 aa). Residues 13-33 form an NR C4-type zinc finger; the sequence is CPVCGDKVSGYHYGLLTCESC. 3 positions are modified to N6-acetyllysine: Lys34, Lys38, and Lys72. The segment at 49-73 adopts an NR C4-type zinc-finger fold; it reads CTESQSCKIDKTQRKRCPFCRFQKC. Residue Lys119 forms a Glycyl lysine isopeptide (Lys-Gly) (interchain with G-Cter in SUMO) linkage. The tract at residues 119 to 150 is disordered; it reads KLETGPPMGVAPPPPPPPDYMLPPGLHAPEPK. The span at 127 to 139 shows a compositional bias: pro residues; that stretch reads GVAPPPPPPPDYM. Lys194 is covalently cross-linked (Glycyl lysine isopeptide (Lys-Gly) (interchain with G-Cter in SUMO)). The residue at position 203 (Ser203) is a Phosphoserine; by CDK7. The 238-residue stretch at 222–459 folds into the NR LBD domain; that stretch reads GVPELIVQLL…NLLIEMLQAK (238 aa). An important for dimerization region spans residues 230-461; sequence LLQLEPDEDQ…LIEMLQAKQT (232 aa). Gly341, Tyr436, and Lys440 together coordinate a 1,2-diacyl-sn-glycero-3-phosphocholine.

The protein belongs to the nuclear hormone receptor family. NR5 subfamily. Binds DNA as a monomer. Part of a complex consisting of SFPQ, NONO and NR5A1. Interacts with NR0B2, NCOA2 and PPARGC1A. Interacts with DGKQ and CDK7. Binds to and activated by HIPK3. Acetylation stimulates the transcriptional activity. Post-translationally, sumoylation reduces CDK7-mediated phosphorylation on Ser-203. In terms of processing, phosphorylated on Ser-203 by CDK7. This phosphorylation promotes transcriptional activity.

The protein resides in the nucleus. In terms of biological role, transcriptional activator. Seems to be essential for sexual differentiation and formation of the primary steroidogenic tissues. Binds to the Ad4 site found in the promoter region of steroidogenic P450 genes such as CYP11A, CYP11B and CYP21B. Also regulates the AMH/Muellerian inhibiting substance gene as well as the AHCH and STAR genes. 5'-YCAAGGYC-3' and 5'-RRAGGTCA-3' are the consensus sequences for the recognition by NR5A1. The SFPQ-NONO-NR5A1 complex binds to the CYP17 promoter and regulates basal and cAMP-dependent transcriptional activity. Binds phosphatidylcholine and phospholipids with a phosphatidylinositol (PI) headgroup, in particular PI(3,4)P2 and PI(3,4,5)P3. Activated by the phosphorylation of NR5A1 by HIPK3 leading to increased steroidogenic gene expression upon cAMP signaling pathway stimulation. The polypeptide is Steroidogenic factor 1 (NR5A1) (Sus scrofa (Pig)).